Consider the following 196-residue polypeptide: Probable GTP-binding protein EngB (196 aa).

Residues 22–196 (NLPEIALSGR…GNWIEEKISK (175 aa)) enclose the EngB-type G domain. Residues 30–37 (GRSNVGKS), 57–61 (GKTQT), 75–78 (DVPG), 142–145 (TKID), and 175–177 (FSS) each bind GTP. The Mg(2+) site is built by Ser37 and Thr59.

It belongs to the TRAFAC class TrmE-Era-EngA-EngB-Septin-like GTPase superfamily. EngB GTPase family. Mg(2+) serves as cofactor.

In terms of biological role, necessary for normal cell division and for the maintenance of normal septation. This Lactobacillus helveticus (strain DPC 4571) protein is Probable GTP-binding protein EngB.